The following is a 551-amino-acid chain: Cilia- and flagella-associated protein 45 (551 aa).

3 disordered regions span residues 1–52 (MPLR…KSDS), 232–256 (MEIDRRESLQRQEDRERKRREERVR), and 385–415 (EQDALRAKRNQEVADREWRRKEKENAQKKIE). The segment covering 8–18 (ASSSASTASNR) has biased composition (low complexity). Positions 276–524 (AEHREQEKEQ…EDIKKQKLEE (249 aa)) form a coiled coil. The segment covering 387 to 415 (DALRAKRNQEVADREWRRKEKENAQKKIE) has biased composition (basic and acidic residues).

Belongs to the CFAP45 family. As to quaternary structure, microtubule inner protein component of sperm flagellar doublet microtubules. Interacts with AK8; dimerization with AK8 may create a cavity at the interface of the dimer that can accommodate AMP. Interacts with CFAP52. Interacts with ENKUR. Directly interacts with DNALI1. Interacts with DNAH11. Interacts with DNAI1. In terms of tissue distribution, expressed in respiratory cells and in sperm (at protein level).

The protein localises to the cytoplasm. Its subcellular location is the cytoskeleton. It localises to the cilium axoneme. The protein resides in the flagellum axoneme. It is found in the cell projection. The protein localises to the cilium. Its subcellular location is the flagellum. Microtubule inner protein (MIP) part of the dynein-decorated doublet microtubules (DMTs) in cilia axoneme, which is required for motile cilia beating. It is an AMP-binding protein that may facilitate dynein ATPase-dependent ciliary and flagellar beating via adenine nucleotide homeostasis. May function as a donor of AMP to AK8 and hence promote ADP production. This is Cilia- and flagella-associated protein 45 (Cfap45) from Mus musculus (Mouse).